A 37-amino-acid chain; its full sequence is Large ribosomal subunit protein bL36 (37 aa).

The protein belongs to the bacterial ribosomal protein bL36 family.

The sequence is that of Large ribosomal subunit protein bL36 from Dehalococcoides mccartyi (strain ATCC BAA-2266 / KCTC 15142 / 195) (Dehalococcoides ethenogenes (strain 195)).